We begin with the raw amino-acid sequence, 206 residues long: MLSAQLKTYLAEMNMSATELQQKQLIGFVEMLDKWNKAYNLTAVRDPEQMLIRHVMDSLTVSPYLEGQRFIDVGTGPGLPGIPLAIMNPDKQFVLLDSLGKRIRFQKQVQFELKINNITSVESRVEAYIPEIKFDGVLSRAFASIQDMLSWCHHLPTEKGTFYALKGQLNQQELQEMPTGFSLVETIVLHVPMLDEQRHLLKIAKQ.

S-adenosyl-L-methionine is bound by residues Gly74, Leu79, 125–126 (VE), and Arg140.

Belongs to the methyltransferase superfamily. RNA methyltransferase RsmG family.

The protein resides in the cytoplasm. The catalysed reaction is guanosine(527) in 16S rRNA + S-adenosyl-L-methionine = N(7)-methylguanosine(527) in 16S rRNA + S-adenosyl-L-homocysteine. In terms of biological role, specifically methylates the N7 position of guanine in position 527 of 16S rRNA. This Shewanella frigidimarina (strain NCIMB 400) protein is Ribosomal RNA small subunit methyltransferase G.